A 349-amino-acid chain; its full sequence is 2-oxoglutarate and iron-dependent oxygenase domain-containing protein 2 (349 aa).

One can recognise a Fe2OG dioxygenase domain in the interval 214-308 (DSHRAFVVKY…RWNLVVWLRA (95 aa)). Positions 234, 236, and 289 each coordinate Fe cation. Arg-299 provides a ligand contact to 2-oxoglutarate.

Belongs to the OGFOD2 family. The cofactor is Fe(2+). L-ascorbate serves as cofactor.

This Mus musculus (Mouse) protein is 2-oxoglutarate and iron-dependent oxygenase domain-containing protein 2 (Ogfod2).